Reading from the N-terminus, the 129-residue chain is Large ribosomal subunit protein bL12 (129 aa).

This sequence belongs to the bacterial ribosomal protein bL12 family. As to quaternary structure, homodimer. Part of the ribosomal stalk of the 50S ribosomal subunit. Forms a multimeric L10(L12)X complex, where L10 forms an elongated spine to which 2 to 4 L12 dimers bind in a sequential fashion. Binds GTP-bound translation factors.

Forms part of the ribosomal stalk which helps the ribosome interact with GTP-bound translation factors. Is thus essential for accurate translation. This chain is Large ribosomal subunit protein bL12, found in Treponema pallidum (strain Nichols).